The primary structure comprises 284 residues: Putative ABC transporter ATP-binding protein SCO5958 (284 aa).

The 236-residue stretch at 15–250 (VALRGAAFAY…DLLRRAGLRL (236 aa)) folds into the ABC transporter domain. 48 to 55 (GRNGSGKT) contacts ATP.

The protein belongs to the ABC transporter superfamily.

The protein localises to the cell membrane. Probably part of an ABC transporter complex. Responsible for energy coupling to the transport system. The chain is Putative ABC transporter ATP-binding protein SCO5958 from Streptomyces coelicolor (strain ATCC BAA-471 / A3(2) / M145).